The sequence spans 400 residues: Deoxyhypusine synthase-like protein (400 aa).

The tract at residues 372-400 (KLGKEQMPEPQSTEPVATYPCGTPIKGRK) is disordered.

This sequence belongs to the deoxyhypusine synthase family.

The protein is Deoxyhypusine synthase-like protein of Cyanothece sp. (strain PCC 7425 / ATCC 29141).